Here is a 179-residue protein sequence, read N- to C-terminus: Large ribosomal subunit protein uL6 (179 aa).

The protein belongs to the universal ribosomal protein uL6 family. Part of the 50S ribosomal subunit.

Functionally, this protein binds to the 23S rRNA, and is important in its secondary structure. It is located near the subunit interface in the base of the L7/L12 stalk, and near the tRNA binding site of the peptidyltransferase center. The chain is Large ribosomal subunit protein uL6 from Legionella pneumophila (strain Paris).